Reading from the N-terminus, the 205-residue chain is Small ribosomal subunit protein uS4 (205 aa).

Residues 21–47 (GRPKSPFNKRDYGPGQHGQGRKGKPSD) form a disordered region. The 61-residue stretch at 94–154 (RRLDSVVYRA…DKSKQLAIID (61 aa)) folds into the S4 RNA-binding domain.

The protein belongs to the universal ribosomal protein uS4 family. Part of the 30S ribosomal subunit. Contacts protein S5. The interaction surface between S4 and S5 is involved in control of translational fidelity.

Its function is as follows. One of the primary rRNA binding proteins, it binds directly to 16S rRNA where it nucleates assembly of the body of the 30S subunit. With S5 and S12 plays an important role in translational accuracy. The protein is Small ribosomal subunit protein uS4 of Pelagibacter ubique (strain HTCC1062).